Reading from the N-terminus, the 80-residue chain is Probable Rubredoxin-1 (80 aa).

In terms of domain architecture, Rubredoxin-like spans 19 to 72; the sequence is YRKYKCKVCGWVYDPLKGDPSQNIPPKTPFEELPDTWICPVCRGKVGKESFEPL. Residues cysteine 24, cysteine 27, cysteine 57, and cysteine 60 each coordinate Fe cation.

This sequence belongs to the rubredoxin family. It depends on Fe(3+) as a cofactor.

In terms of biological role, rubredoxin is a small nonheme, iron protein lacking acid-labile sulfide. Its single Fe, chelated to 4 Cys, functions as an electron acceptor and may also stabilize the conformation of the molecule. This chain is Probable Rubredoxin-1, found in Methanocaldococcus jannaschii (strain ATCC 43067 / DSM 2661 / JAL-1 / JCM 10045 / NBRC 100440) (Methanococcus jannaschii).